Consider the following 218-residue polypeptide: Pyridoxal 5'-phosphate synthase subunit PdxT (218 aa).

Position 54-56 (Gly54–Ser56) interacts with L-glutamine. Catalysis depends on Cys86, which acts as the Nucleophile. L-glutamine is bound by residues Arg120 and Ile149–Arg150. Residues His197 and Glu199 each act as charge relay system in the active site.

Belongs to the glutaminase PdxT/SNO family. In terms of assembly, in the presence of PdxS, forms a dodecamer of heterodimers. Only shows activity in the heterodimer.

The catalysed reaction is aldehydo-D-ribose 5-phosphate + D-glyceraldehyde 3-phosphate + L-glutamine = pyridoxal 5'-phosphate + L-glutamate + phosphate + 3 H2O + H(+). The enzyme catalyses L-glutamine + H2O = L-glutamate + NH4(+). The protein operates within cofactor biosynthesis; pyridoxal 5'-phosphate biosynthesis. Functionally, catalyzes the hydrolysis of glutamine to glutamate and ammonia as part of the biosynthesis of pyridoxal 5'-phosphate. The resulting ammonia molecule is channeled to the active site of PdxS. This Saccharopolyspora erythraea (strain ATCC 11635 / DSM 40517 / JCM 4748 / NBRC 13426 / NCIMB 8594 / NRRL 2338) protein is Pyridoxal 5'-phosphate synthase subunit PdxT.